Reading from the N-terminus, the 689-residue chain is Glycine--tRNA ligase beta subunit (689 aa).

The protein belongs to the class-II aminoacyl-tRNA synthetase family. In terms of assembly, tetramer of two alpha and two beta subunits.

The protein localises to the cytoplasm. It catalyses the reaction tRNA(Gly) + glycine + ATP = glycyl-tRNA(Gly) + AMP + diphosphate. This is Glycine--tRNA ligase beta subunit from Escherichia coli O7:K1 (strain IAI39 / ExPEC).